We begin with the raw amino-acid sequence, 368 residues long: Probable pectate lyase 4 (368 aa).

An N-terminal signal peptide occupies residues 1–25 (MASLVVIVSLLLAAFASPLLETAHS). N-linked (GlcNAc...) asparagine glycosylation is present at Asn27. Asp167, Asp191, and Asp195 together coordinate Ca(2+). Arg247 is a catalytic residue.

The protein belongs to the polysaccharide lyase 1 family. Requires Ca(2+) as cofactor.

The catalysed reaction is Eliminative cleavage of (1-&gt;4)-alpha-D-galacturonan to give oligosaccharides with 4-deoxy-alpha-D-galact-4-enuronosyl groups at their non-reducing ends.. It participates in glycan metabolism; pectin degradation; 2-dehydro-3-deoxy-D-gluconate from pectin: step 2/5. The sequence is that of Probable pectate lyase 4 from Arabidopsis thaliana (Mouse-ear cress).